A 219-amino-acid chain; its full sequence is Capsid protein (219 aa).

The segment at 5–29 (RRRRVVRRRKPVRRLRRRRRRFFKR) is nuclear localization signals.

Belongs to the circoviridae capsid protein family. As to quaternary structure, homomultimer. Assembles in the nucleus, presumably in an immature form, then migrates to the cytoplasm once assembled as mature virion. Interacts with Rep; this interaction relocates Rep into the nucleus.

The protein resides in the host nucleus. It localises to the virion. In terms of biological role, self-assembles to form the virion icosahedral capsid with a T=1 symmetry. This very small capsid (17-22 nm in diameter) allows the virus to be very stable in the environment and resistant to some disinfectants, including detergents. Essential for the initial attachment to heparan sulfate moieties and chondroitin sulfate B of the host cell surface proteoglycans. After attachment, the virus is endocytosed and traffics to the nucleus. The capsid protein binds and transports the viral genome and Rep across the nuclear envelope. In Homo sapiens (Human), this protein is Capsid protein (Cap).